Consider the following 258-residue polypeptide: Meiotic drive suppressor wtf20 (258 aa).

The disordered stretch occupies residues 1–71 (MKNNYTSLKS…GPTEIANPNV (71 aa)). Residues 19-30 (KTDHEIDLEKGL) show a composition bias toward basic and acidic residues. The next 3 membrane-spanning stretches (helical) occupy residues 84 to 106 (IYFL…TAWV), 121 to 140 (FSVT…FYFY), and 196 to 216 (SASA…AETV).

This sequence belongs to the WTF family. As to quaternary structure, homomer. Interacts with other proteins that exhibit high sequence similarity.

The protein resides in the spore membrane. Its subcellular location is the vacuole membrane. Functionally, acts as a suppressor component of the dual wtf meiotic drive system, and can suppress but not confer meiotic drive by compatible poisons. Wtf meiotic drive systems promote unequal transmission of alleles from the parental zygote to progeny spores by encoding a poison and an antidote from the same locus; the poison is trans-acting and forms toxic aggregates in all spores within an ascus, wherease the antidote is spore-specific and targets aggregates for degradation by the vacuole. Meiotic drive by wtf systems therefore lead to poisoning of all progeny that do not inherit the dual poison/antidote allele, or express a compatible antidote. This is Meiotic drive suppressor wtf20 from Schizosaccharomyces pombe (strain 972 / ATCC 24843) (Fission yeast).